Reading from the N-terminus, the 685-residue chain is Mitotic interactor and substrate of PLK1 (685 aa).

The residue at position 78 (S78) is a Phosphoserine; by CDK1. 2 disordered regions span residues 155–181 and 207–253; these read SGTV…STPL and NKEV…QGKG. The residue at position 172 (T172) is a Phosphothreonine; by CDK1. The residue at position 179 (T179) is a Phosphothreonine. S214 is modified (phosphoserine; by CDK1). At T219 the chain carries Phosphothreonine. Residue S284 is modified to Phosphoserine; by CDK1. T287 bears the Phosphothreonine; by CDK1 mark. A disordered region spans residues 345 to 499; sequence GRPSLYVQRD…PWKLPRGSPQ (155 aa). S348 is subject to Phosphoserine. The segment covering 355-371 has biased composition (basic and acidic residues); the sequence is MVQETQREEDHRREGLH. A Phosphothreonine; by CDK1 modification is found at T377. Phosphoserine is present on S382. Positions 392 to 417 are enriched in low complexity; the sequence is ALSSDSILSPDSILSPAPDARAADPA. Phosphoserine; by PLK1 occurs at positions 394, 395, and 397. Phosphoserine is present on residues S406 and S436. The span at 454–469 shows a compositional bias: polar residues; that stretch reads SGLSTVDTEAATSPKA. A Phosphoserine; by PLK1 modification is found at S477. The segment covering 478–488 has biased composition (polar residues); that stretch reads ESSGKPMSTKQ. S547 and S549 each carry phosphoserine. Positions 551–575 form a coiled coil; that stretch reads DLLERERESVLRREREVAEERRNAL. 2 disordered regions span residues 575 to 607 and 629 to 651; these read LFPE…SYSV and PVDS…NPSD. S581 bears the Phosphoserine; by PLK1 mark. Phosphothreonine is present on T583. The segment covering 589–607 has biased composition (polar residues); that stretch reads DQNSRSSSQASGITGSYSV. S592 bears the Phosphoserine; by PLK1 mark. At S681 the chain carries Phosphoserine.

This sequence belongs to the MISP family. As to quaternary structure, associates with F-actin. Interacts with DCTN1; this interaction regulates DCTN1 distribution at the cell cortex. Interacts with PTK2/FAK and MAPRE1. Phosphorylated by CDK1 and PLK1. CDK1 is the priming kinase for PLK1 phosphorylation. Phosphorylation by PLK1 is required for proper spindle orientation at metaphase.

It localises to the cell junction. The protein resides in the focal adhesion. Its subcellular location is the cytoplasm. The protein localises to the cytoskeleton. It is found in the cell cortex. Functionally, plays a role in mitotic spindle orientation and mitotic progression. Regulates the distribution of dynactin at the cell cortex in a PLK1-dependent manner, thus stabilizing cortical and astral microtubule attachments required for proper mitotic spindle positioning. May link microtubules to the actin cytospkeleton and focal adhesions. May be required for directed cell migration and centrosome orientation. May also be necessary for proper stacking of the Golgi apparatus. This chain is Mitotic interactor and substrate of PLK1, found in Pongo abelii (Sumatran orangutan).